We begin with the raw amino-acid sequence, 388 residues long: Dauer abnormal formation protein 25 (388 aa).

ANK repeat units follow at residues 40 to 69 (SGMSVLAAAAYRGNLTLVEKAIELKCDVND), 74 to 103 (TLYTPLMFAALSGKQDVCRLLMDSGARMYL), and 107 to 137 (IGKTASELAAFVGHHECVAIINNHITIDVIE). Cys321, Cys324, Cys333, Cys336, Cys341, Cys345, His353, and Cys357 together coordinate Zn(2+). An MYND-type zinc finger spans residues 321-357 (CSVCGHPGAKKRCTQCKLAYCSQECQKFDWPIHKKVC).

In terms of tissue distribution, expressed in many ciliated sensory neurons.

The protein localises to the cell projection. Its subcellular location is the cilium. Functionally, may be involved in the trafficking and dendritic transport of signaling proteins, such as the receptor-type guanylate cyclases gcy-12 and daf-11, to the cilia. In ciliated sensory neurons, required for the calcium flux to the cytoplasm in response to onset and removal of a nitric oxide (NO) stimulus and is thereby required for the behavioral avoidance response to NO-producing organisms like P.aeruginosa. The polypeptide is Dauer abnormal formation protein 25 (daf-25) (Caenorhabditis elegans).